A 646-amino-acid chain; its full sequence is Aquaglycerol porin AQY3 (646 aa).

A compositionally biased stretch (low complexity) spans 1–14 (MSYESGRSSSSSES). 2 disordered regions span residues 1–68 (MSYE…SRNK) and 175–262 (KNMD…KKRT). At 1–350 (MSYESGRSSS…AKIRYHMREP (350 aa)) the chain is on the cytoplasmic side. A compositionally biased stretch (basic and acidic residues) spans 19–41 (TLKEEPNGKIAWEESVKKSRENN). Polar residues predominate over residues 190–201 (TDISRGGSTTSV). A helical membrane pass occupies residues 351–371 (FAEFLGTLVLVIFGVGGNLQA). The Extracellular portion of the chain corresponds to 372-383 (TVTKGSGGSYES). A helical transmembrane segment spans residues 384–404 (LSFAWGFGCMLGVYVAGGISG). Topologically, residues 405–427 (GHINPAVTISMAIFRKFPWKKVP) are cytoplasmic. Residues 408 to 410 (NPA) carry the NPA 1 motif. A helical membrane pass occupies residues 428-448 (VYIVAQIIGAYFGGAMAYGYF). The Extracellular portion of the chain corresponds to 449 to 481 (WSSITEFEGGPHIRTTATGACLFTDPKSYVTWR). A helical membrane pass occupies residues 482 to 502 (NAFFDEFIGASILVGCLMALL). Residues 503–509 (DDSNAPP) lie on the Cytoplasmic side of the membrane. The chain crosses the membrane as a helical span at residues 510-530 (GNGMTALIIGFLVAAIGMALG). Topologically, residues 531 to 569 (YQTSFTINPARDLGPRIFASMIGYGPHAFHLTHWWWTWG) are extracellular. Residues 538–540 (NPA) carry the NPA 2 motif. Residues 570-590 (AWGGPIAGGIAGALIYDIFIF) traverse the membrane as a helical segment. Topologically, residues 591 to 646 (TGCESPVNYPDNGYIENRVGKLLHAEFHQNDGTVSDESGVNSNSNTGSKKSVPTSS) are cytoplasmic. The disordered stretch occupies residues 621 to 646 (DGTVSDESGVNSNSNTGSKKSVPTSS).

Belongs to the MIP/aquaporin (TC 1.A.8) family.

Its subcellular location is the cell membrane. The catalysed reaction is glycerol(in) = glycerol(out). Its function is as follows. Channel protein that mediates glycerol entry under ethanol stimulation. Does not seem to mediate glycerol uptake under standard conditions. In Saccharomyces cerevisiae (strain ATCC 204508 / S288c) (Baker's yeast), this protein is Aquaglycerol porin AQY3.